Here is a 227-residue protein sequence, read N- to C-terminus: Venom allergen 5 (227 aa).

An N-terminal signal peptide occupies residues 1-21; sequence MKISCLICLVIVLTIIHLSQA. 4 disulfide bridges follow: Cys25-Cys37, Cys29-Cys125, Cys49-Cys117, and Cys193-Cys210. The 144-residue stretch at 69–212 folds into the SCP domain; sequence EEHNRFRQKV…MQIHYLICNY (144 aa).

The protein belongs to the CRISP family. Venom allergen 5-like subfamily. As to expression, expressed by the venom gland.

Its subcellular location is the secreted. The sequence is that of Venom allergen 5 from Polistes dominula (European paper wasp).